The chain runs to 111 residues: Ribonuclease P protein component (111 aa).

It belongs to the RnpA family. Consists of a catalytic RNA component (M1 or rnpB) and a protein subunit.

The catalysed reaction is Endonucleolytic cleavage of RNA, removing 5'-extranucleotides from tRNA precursor.. In terms of biological role, RNaseP catalyzes the removal of the 5'-leader sequence from pre-tRNA to produce the mature 5'-terminus. It can also cleave other RNA substrates such as 4.5S RNA. The protein component plays an auxiliary but essential role in vivo by binding to the 5'-leader sequence and broadening the substrate specificity of the ribozyme. This Clostridium botulinum (strain 657 / Type Ba4) protein is Ribonuclease P protein component.